Here is a 302-residue protein sequence, read N- to C-terminus: Acetylglutamate kinase (302 aa).

Substrate is bound by residues 67 to 68 (GG), R89, and N194.

This sequence belongs to the acetylglutamate kinase family. ArgB subfamily.

It localises to the cytoplasm. It catalyses the reaction N-acetyl-L-glutamate + ATP = N-acetyl-L-glutamyl 5-phosphate + ADP. It participates in amino-acid biosynthesis; L-arginine biosynthesis; N(2)-acetyl-L-ornithine from L-glutamate: step 2/4. Catalyzes the ATP-dependent phosphorylation of N-acetyl-L-glutamate. This Hahella chejuensis (strain KCTC 2396) protein is Acetylglutamate kinase.